The primary structure comprises 503 residues: ATP synthase subunit alpha (503 aa).

Position 169 to 176 (169 to 176 (GDRQTGKT)) interacts with ATP.

The protein belongs to the ATPase alpha/beta chains family. F-type ATPases have 2 components, CF(1) - the catalytic core - and CF(0) - the membrane proton channel. CF(1) has five subunits: alpha(3), beta(3), gamma(1), delta(1), epsilon(1). CF(0) has three main subunits: a(1), b(2) and c(9-12). The alpha and beta chains form an alternating ring which encloses part of the gamma chain. CF(1) is attached to CF(0) by a central stalk formed by the gamma and epsilon chains, while a peripheral stalk is formed by the delta and b chains.

It is found in the cell membrane. It catalyses the reaction ATP + H2O + 4 H(+)(in) = ADP + phosphate + 5 H(+)(out). In terms of biological role, produces ATP from ADP in the presence of a proton gradient across the membrane. The alpha chain is a regulatory subunit. The chain is ATP synthase subunit alpha from Staphylococcus epidermidis (strain ATCC 35984 / DSM 28319 / BCRC 17069 / CCUG 31568 / BM 3577 / RP62A).